The following is a 391-amino-acid chain: MASGDESKRRLTILGSTGSIGTNTLDVVERLGGRNRFEIAALTGNGNIPLLADQARRMGAELAVTADEHRYGELKDALGGSGIEVAAGRSGLIEAAERDAGWLMAAIVGNAGLGPTLAAARRGADIALANKECLVSAGSLFIEAVAKGGGRLLPVDSEHNAIFQVLENDQRHAVERIILTASGGPFRTKSLEEMRHVTADIARAHPNWSMGLKISIDSASMFNKALEMIEARHLFRLRPDQIEVIVHPQSVIHSMVGYSDGSVLAQLGCPDMRTAIGYALTYPKRCDLPIERLDFAKLARLDFEAPDEARFPALRLARRAMQAGGIQGAVLNGAKETALEAFIKGRIGFLAMAEIVEKVMDRLSDLPAAVTMDDVFAADEKARLTAAGLIQ.

NADPH is bound by residues Thr-17, Gly-18, Ser-19, Ile-20, Asn-47, and Asn-130. Position 131 (Lys-131) interacts with 1-deoxy-D-xylulose 5-phosphate. NADPH is bound at residue Glu-132. Residue Asp-156 coordinates Mn(2+). 1-deoxy-D-xylulose 5-phosphate is bound by residues Ser-157, Glu-158, Ser-182, and His-205. Glu-158 contributes to the Mn(2+) binding site. Residue Gly-211 participates in NADPH binding. Residues Ser-218, Asn-223, Lys-224, and Glu-227 each contribute to the 1-deoxy-D-xylulose 5-phosphate site. Glu-227 is a Mn(2+) binding site.

It belongs to the DXR family. Requires Mg(2+) as cofactor. The cofactor is Mn(2+).

It carries out the reaction 2-C-methyl-D-erythritol 4-phosphate + NADP(+) = 1-deoxy-D-xylulose 5-phosphate + NADPH + H(+). The protein operates within isoprenoid biosynthesis; isopentenyl diphosphate biosynthesis via DXP pathway; isopentenyl diphosphate from 1-deoxy-D-xylulose 5-phosphate: step 1/6. Its function is as follows. Catalyzes the NADPH-dependent rearrangement and reduction of 1-deoxy-D-xylulose-5-phosphate (DXP) to 2-C-methyl-D-erythritol 4-phosphate (MEP). In Sinorhizobium fredii (strain NBRC 101917 / NGR234), this protein is 1-deoxy-D-xylulose 5-phosphate reductoisomerase.